Here is an 882-residue protein sequence, read N- to C-terminus: Translation initiation factor IF-2 (882 aa).

Disordered regions lie at residues 67–202 (KTVS…EKAR) and 223–278 (ERYG…KHMK). 2 stretches are compositionally biased toward basic and acidic residues: residues 95–152 (VKRD…EAKA) and 161–202 (EQPK…EKAR). Residues 251-264 (GRRNRNKTQTKSKR) are compositionally biased toward basic residues. Over residues 265-274 (GGKDAREGRE) the composition is skewed to basic and acidic residues. The tr-type G domain occupies 382–551 (PRAPVVTIMG…LLQAEVLELK (170 aa)). Residues 391 to 398 (GHVDHGKT) form a G1 region. A GTP-binding site is contributed by 391-398 (GHVDHGKT). Residues 416–420 (GITQH) are G2. Residues 437-440 (DTPG) form a G3 region. Residues 437 to 441 (DTPGH) and 491 to 494 (NKMD) contribute to the GTP site. Residues 491 to 494 (NKMD) are G4. The segment at 527 to 529 (SAK) is G5.

It belongs to the TRAFAC class translation factor GTPase superfamily. Classic translation factor GTPase family. IF-2 subfamily.

The protein localises to the cytoplasm. One of the essential components for the initiation of protein synthesis. Protects formylmethionyl-tRNA from spontaneous hydrolysis and promotes its binding to the 30S ribosomal subunits. Also involved in the hydrolysis of GTP during the formation of the 70S ribosomal complex. This Shewanella amazonensis (strain ATCC BAA-1098 / SB2B) protein is Translation initiation factor IF-2.